The following is an 88-amino-acid chain: Small ribosomal subunit protein uS17 (88 aa).

This sequence belongs to the universal ribosomal protein uS17 family. Part of the 30S ribosomal subunit.

In terms of biological role, one of the primary rRNA binding proteins, it binds specifically to the 5'-end of 16S ribosomal RNA. This Prochlorococcus marinus subsp. pastoris (strain CCMP1986 / NIES-2087 / MED4) protein is Small ribosomal subunit protein uS17.